The sequence spans 184 residues: Ribosome-recycling factor (184 aa).

The protein belongs to the RRF family.

It localises to the cytoplasm. Responsible for the release of ribosomes from messenger RNA at the termination of protein biosynthesis. May increase the efficiency of translation by recycling ribosomes from one round of translation to another. The sequence is that of Ribosome-recycling factor from Fervidobacterium nodosum (strain ATCC 35602 / DSM 5306 / Rt17-B1).